The primary structure comprises 497 residues: MDVPGPVSRRAAAAAATVLLRTARVRRECWFLPTALLCAYGFFASLRPSEPFLTPYLLGPDKNLTEREVFNEIYPVWTYSYLVLLFPVFLATDYLRYKPVVLLQGLSLIVTWFMLLYAQGLLAIQFLEFFYGIATATEIAYYSYIYSVVDLGMYQKVTSYCRSATLVGFTVGSVLGQILVSVAGWSLFSLNVISLTCVSVAFAVAWFLPMPQKSLFFHHIPSTCQRVNGIKVQNGGIVTDTPASNHLPGWEDIESKIPLNMEEPPVEEPEPKPDRLLVLKVLWNDFLMCYSSRPLLCWSVWWALSTCGYFQVVNYTQGLWEKVMPSRYAAIYNGGVEAVSTLLGAVAVFAVGYIKISWSTWGEMTLSLFSLLIAAAVYIMDTVGNIWVCYASYVVFRIIYMLLITIATFQIAANLSMERYALVFGVNTFIALALQTLLTLIVVDASGLGLEITTQFLIYASYFALIAVVFLASGAVSVMKKCRKLEDPQSSSQVTTS.

An N-acetylmethionine modification is found at Met-1. Residues Met-1 to Glu-28 lie on the Cytoplasmic side of the membrane. Residues Cys-29–Leu-46 form a helical membrane-spanning segment. The Extracellular portion of the chain corresponds to Arg-47–Glu-72. N-linked (GlcNAc...) asparagine glycosylation is present at Asn-63. A helical transmembrane segment spans residues Ile-73–Ala-91. Topologically, residues Thr-92–Pro-99 are cytoplasmic. A helical membrane pass occupies residues Val-100–Ala-118. Residues Gln-119–Glu-128 are Extracellular-facing. Residues Phe-129–Val-149 traverse the membrane as a helical segment. At Asp-150–Thr-165 the chain is on the cytoplasmic side. A helical membrane pass occupies residues Leu-166–Trp-185. Residues Ser-186–Asn-191 lie on the Extracellular side of the membrane. The chain crosses the membrane as a helical span at residues Val-192 to Leu-208. Over Pro-209 to Asp-285 the chain is Cytoplasmic. The residue at position 222 (Ser-222) is a Phosphoserine. A helical transmembrane segment spans residues Phe-286–Phe-310. Over Gln-311–Glu-337 the chain is Extracellular. A glycan (N-linked (GlcNAc...) asparagine) is linked at Asn-314. A helical membrane pass occupies residues Ala-338 to Ile-354. Residues Lys-355–Glu-363 lie on the Cytoplasmic side of the membrane. Residues Met-364 to Met-380 form a helical membrane-spanning segment. The Extracellular portion of the chain corresponds to Asp-381 to Ile-386. Residues Trp-387–Phe-409 form a helical membrane-spanning segment. Over Gln-410–Arg-419 the chain is Cytoplasmic. A helical membrane pass occupies residues Tyr-420–Val-443. The Extracellular portion of the chain corresponds to Asp-444 to Gln-455. A helical membrane pass occupies residues Phe-456 to Met-479. Over Lys-480 to Ser-497 the chain is Cytoplasmic.

The protein belongs to the reduced folate carrier (RFC) transporter (TC 2.A.48) family. Interacts with TSPAN1; this interaction increases the stability of SLC19A2. Interacts with TMEM63B. Ubiquitous; most abundant in skeletal and cardiac muscle. Medium expression in placenta, heart, liver and kidney, low in lung.

It is found in the cell membrane. The enzyme catalyses thiamine(out) + H(+)(in) = thiamine(in) + H(+)(out). It carries out the reaction pyridoxine(out) + n H(+)(out) = pyridoxine(in) + n H(+)(in). Its activity is regulated as follows. Pyridoxine transport is inhibited by carbonyl cyanide p-trifluoromethoxyphenylhydrazone (FCCP) and carbonyl cyanide m-chlorophenylhydrazone (CCCP). In terms of biological role, high-affinity transporter for the intake of thiamine. Mediates H(+)-dependent pyridoxine transport. This is Thiamine transporter 1 (SLC19A2) from Homo sapiens (Human).